A 205-amino-acid polypeptide reads, in one-letter code: ATP-dependent Clp protease proteolytic subunit 2 (205 aa).

Catalysis depends on Ser100, which acts as the Nucleophile. The active site involves His125.

It belongs to the peptidase S14 family. In terms of assembly, fourteen ClpP subunits assemble into 2 heptameric rings which stack back to back to give a disk-like structure with a central cavity, resembling the structure of eukaryotic proteasomes.

It is found in the cytoplasm. The enzyme catalyses Hydrolysis of proteins to small peptides in the presence of ATP and magnesium. alpha-casein is the usual test substrate. In the absence of ATP, only oligopeptides shorter than five residues are hydrolyzed (such as succinyl-Leu-Tyr-|-NHMec, and Leu-Tyr-Leu-|-Tyr-Trp, in which cleavage of the -Tyr-|-Leu- and -Tyr-|-Trp bonds also occurs).. Functionally, cleaves peptides in various proteins in a process that requires ATP hydrolysis. Has a chymotrypsin-like activity. Plays a major role in the degradation of misfolded proteins. This chain is ATP-dependent Clp protease proteolytic subunit 2, found in Chlamydia abortus (strain DSM 27085 / S26/3) (Chlamydophila abortus).